Consider the following 199-residue polypeptide: Small ribosomal subunit protein uS4c (199 aa).

Positions 1-24 (MESDQSKVESDQSKMESDQSKVES) are enriched in basic and acidic residues. The disordered stretch occupies residues 1–35 (MESDQSKVESDQSKMESDQSKVESDQSISQSTSKK). One can recognise an S4 RNA-binding domain in the interval 84–146 (MRLDNIIFRL…QKSQELIKRN (63 aa)).

Belongs to the universal ribosomal protein uS4 family. Part of the 30S ribosomal subunit. Contacts protein S5. The interaction surface between S4 and S5 is involved in control of translational fidelity.

It localises to the plastid. Its subcellular location is the chloroplast. One of the primary rRNA binding proteins, it binds directly to 16S rRNA where it nucleates assembly of the body of the 30S subunit. Its function is as follows. With S5 and S12 plays an important role in translational accuracy. This Psilotum nudum (Whisk fern) protein is Small ribosomal subunit protein uS4c (rps4).